Here is a 395-residue protein sequence, read N- to C-terminus: S-adenosylmethionine synthase (395 aa).

H16 contributes to the ATP binding site. D18 contributes to the Mg(2+) binding site. E44 is a K(+) binding site. 2 residues coordinate L-methionine: E57 and Q100. The segment at Q100–D110 is flexible loop. ATP contacts are provided by residues D174–K176, R241–F242, D250, R256–K257, A273, and K277. Residue D250 coordinates L-methionine. Residue K281 participates in L-methionine binding.

It belongs to the AdoMet synthase family. As to quaternary structure, homotetramer; dimer of dimers. Requires Mg(2+) as cofactor. K(+) is required as a cofactor.

Its subcellular location is the cytoplasm. It carries out the reaction L-methionine + ATP + H2O = S-adenosyl-L-methionine + phosphate + diphosphate. It participates in amino-acid biosynthesis; S-adenosyl-L-methionine biosynthesis; S-adenosyl-L-methionine from L-methionine: step 1/1. In terms of biological role, catalyzes the formation of S-adenosylmethionine (AdoMet) from methionine and ATP. The overall synthetic reaction is composed of two sequential steps, AdoMet formation and the subsequent tripolyphosphate hydrolysis which occurs prior to release of AdoMet from the enzyme. This Lactiplantibacillus plantarum (strain ATCC BAA-793 / NCIMB 8826 / WCFS1) (Lactobacillus plantarum) protein is S-adenosylmethionine synthase.